A 333-amino-acid chain; its full sequence is 4-hydroxyproline 2-epimerase (333 aa).

Catalysis depends on C91, which acts as the Proton acceptor. Residues G92–H93, H225, and D250 each bind substrate. C254 (proton donor) is an active-site residue. Residue G255–T256 coordinates substrate.

It belongs to the proline racemase family.

It catalyses the reaction trans-4-hydroxy-L-proline = cis-4-hydroxy-D-proline. Catalyzes the epimerization of trans-4-hydroxy-L-proline (t4LHyp) to cis-4-hydroxy-D-proline (c4DHyp). Is likely involved in a degradation pathway that converts t4LHyp to alpha-ketoglutarate. Displays no proline racemase activity. This is 4-hydroxyproline 2-epimerase from Streptosporangium roseum (strain ATCC 12428 / DSM 43021 / JCM 3005 / KCTC 9067 / NCIMB 10171 / NRRL 2505 / NI 9100).